The chain runs to 317 residues: U5 small nuclear ribonucleoprotein TSSC4 (317 aa).

Acidic residues predominate over residues 1–19; it reads MAETEAGLEVEEPTEDDTL. Positions 1–78 are disordered; it reads MAETEAGLEV…IPTTAVQPFH (78 aa). Positions 20 to 37 are enriched in low complexity; it reads PSDTVSLSDSDSDLSLPS. Phosphoserine occurs at positions 57, 64, 83, and 92. The hom2; mediates interaction with the U5 snRNP complexes and required for spliceosomal tri-snRNP complex assembly stretch occupies residues 74-101; that stretch reads VQPFHLRGMSSTFSQRSHSIFDCLESAA. The tract at residues 123 to 151 is disordered; the sequence is VAPPSQTPARSLSRVHGNTDPTRVHPVPD. Positions 146-300 are interaction with SNRNP200; it reads VHPVPDYVSH…SKKRSRDHFR (155 aa). The hom3; mediates interaction with the U5 snRNP complexes stretch occupies residues 147-183; it reads HPVPDYVSHPERWTKYSLEDVSETSEQSNRDAALAFL. Residues 198-238 are hom4; necessary for interaction with the PRPF19 complex and required for spliceosomal tri-snRNP complex assembly; it reads FNQDPSSCGEGRVVFTKPVRGSEARAERKRVLKKGVVSGAG. Residue Lys214 is modified to N6-acetyllysine. The segment at 247-317 is disordered; it reads HLAGPEAEEW…GPGSERGPSV (71 aa).

This sequence belongs to the TSSC4 family. As to quaternary structure, interacts in a RNA-independent manner with distinct U5 snRNP-containing complexes, the mono-U5 snRNP and the post-splicing U5 snRNP-PRPF19 complex. Interacts with SNRNP200; the interaction is direct, excludes recruitment of C9ORF78 and WBP4 to SNRNP200 and negatively regulates its RNA helicase activity. Interacts with PRPF8; the interaction is direct.

It localises to the nucleus. The protein resides in the cytoplasm. In terms of biological role, protein associated with the U5 snRNP, during its maturation and its post-splicing recycling and which is required for spliceosomal tri-snRNP complex assembly in the nucleus. Has a molecular sequestering activity and transiently hinders SNRNP200 binding sites for constitutive splicing factors that intervene later during the assembly of the spliceosome and splicing. Together with its molecular sequestering activity, may also function as a molecular adapter and placeholder, coordinating the assembly of the U5 snRNP and its association with the U4/U6 di-snRNP. In Rattus norvegicus (Rat), this protein is U5 small nuclear ribonucleoprotein TSSC4.